The sequence spans 167 residues: Ureidoglycolate lyase (167 aa).

Belongs to the ureidoglycolate lyase family. In terms of assembly, homodimer. Ni(2+) is required as a cofactor.

It catalyses the reaction (S)-ureidoglycolate = urea + glyoxylate. Its pathway is nitrogen metabolism; (S)-allantoin degradation. Catalyzes the catabolism of the allantoin degradation intermediate (S)-ureidoglycolate, generating urea and glyoxylate. Involved in the utilization of allantoin as nitrogen source. The protein is Ureidoglycolate lyase of Pseudomonas putida (strain ATCC 700007 / DSM 6899 / JCM 31910 / BCRC 17059 / LMG 24140 / F1).